The following is a 516-amino-acid chain: Cytochrome P450 1A2 (516 aa).

Serine 69 is a glycosylation site (O-linked (GlcNAc) serine). Phenylalanine 226 contacts substrate. Cysteine 458 contributes to the heme binding site.

Belongs to the cytochrome P450 family. As to quaternary structure, interacts with PGRMC1; the interaction requires PGRMC1 homodimerization. Heme is required as a cofactor.

The protein resides in the endoplasmic reticulum membrane. The protein localises to the microsome membrane. The enzyme catalyses an organic molecule + reduced [NADPH--hemoprotein reductase] + O2 = an alcohol + oxidized [NADPH--hemoprotein reductase] + H2O + H(+). It carries out the reaction 17beta-estradiol + reduced [NADPH--hemoprotein reductase] + O2 = 2-hydroxy-17beta-estradiol + oxidized [NADPH--hemoprotein reductase] + H2O + H(+). It catalyses the reaction 17beta-estradiol + reduced [NADPH--hemoprotein reductase] + O2 = 4-hydroxy-17beta-estradiol + oxidized [NADPH--hemoprotein reductase] + H2O + H(+). The catalysed reaction is estrone + reduced [NADPH--hemoprotein reductase] + O2 = 2-hydroxyestrone + oxidized [NADPH--hemoprotein reductase] + H2O + H(+). The enzyme catalyses estrone + reduced [NADPH--hemoprotein reductase] + O2 = 4-hydroxyestrone + oxidized [NADPH--hemoprotein reductase] + H2O + H(+). It carries out the reaction cholesterol + reduced [NADPH--hemoprotein reductase] + O2 = 25-hydroxycholesterol + oxidized [NADPH--hemoprotein reductase] + H2O + H(+). It catalyses the reaction all-trans-retinol + reduced [NADPH--hemoprotein reductase] + O2 = all-trans-retinal + oxidized [NADPH--hemoprotein reductase] + 2 H2O + H(+). The catalysed reaction is all-trans-retinal + reduced [NADPH--hemoprotein reductase] + O2 = all-trans-retinoate + oxidized [NADPH--hemoprotein reductase] + H2O + 2 H(+). The enzyme catalyses (5Z,8Z,11Z,14Z)-eicosatetraenoate + reduced [NADPH--hemoprotein reductase] + O2 = (14R,15S)-epoxy-(5Z,8Z,11Z)-eicosatrienoate + oxidized [NADPH--hemoprotein reductase] + H2O + H(+). It carries out the reaction (5Z,8Z,11Z,14Z)-eicosatetraenoate + reduced [NADPH--hemoprotein reductase] + O2 = (14S,15R)-epoxy-(5Z,8Z,11Z)-eicosatrienoate + oxidized [NADPH--hemoprotein reductase] + H2O + H(+). It catalyses the reaction (5Z,8Z,11Z,14Z,17Z)-eicosapentaenoate + reduced [NADPH--hemoprotein reductase] + O2 = (17R,18S)-epoxy-(5Z,8Z,11Z,14Z)-eicosatetraenoate + oxidized [NADPH--hemoprotein reductase] + H2O + H(+). The catalysed reaction is (4Z,7Z,10Z,13Z,16Z,19Z)-docosahexaenoate + reduced [NADPH--hemoprotein reductase] + O2 = (19R,20S)-epoxy-(4Z,7Z,10Z,13Z,16Z)-docosapentaenoate + oxidized [NADPH--hemoprotein reductase] + H2O + H(+). The enzyme catalyses (5S)-hydroperoxy-(6E,8Z,11Z,14Z)-eicosatetraenoate = 5-oxo-(6E,8Z,11Z,14Z)-eicosatetraenoate + H2O. It carries out the reaction (12S)-hydroperoxy-(5Z,8Z,10E,14Z)-eicosatetraenoate = 12-oxo-(5Z,8Z,10E,14Z)-eicosatetraenoate + H2O. It catalyses the reaction (15S)-hydroperoxy-(5Z,8Z,11Z,13E)-eicosatetraenoate = 15-oxo-(5Z,8Z,11Z,13E)-eicosatetraenoate + H2O. The catalysed reaction is (13S)-hydroperoxy-(9Z,11E)-octadecadienoate = 13-oxo-(9Z,11E)-octadecadienoate + H2O. The enzyme catalyses (5Z,8Z,11Z,14Z)-eicosatetraenoate + reduced [NADPH--hemoprotein reductase] + O2 = 13-hydroxy-(5Z,8Z,11Z,14Z)-eicosatetraenoate + oxidized [NADPH--hemoprotein reductase] + H2O + H(+). It carries out the reaction (5Z,8Z,11Z,14Z)-eicosatetraenoate + reduced [NADPH--hemoprotein reductase] + O2 = 19-hydroxy-(5Z,8Z,11Z,14Z)-eicosatetraenoate + oxidized [NADPH--hemoprotein reductase] + H2O + H(+). It catalyses the reaction (9Z,12Z)-octadecadienoate + reduced [NADPH--hemoprotein reductase] + O2 = 11-hydroxy-(9Z,12Z)-octadecadienoate + oxidized [NADPH--hemoprotein reductase] + H2O + H(+). The protein operates within cofactor metabolism; retinol metabolism. Its pathway is steroid metabolism; cholesterol metabolism. It participates in lipid metabolism; arachidonate metabolism. Its function is as follows. A cytochrome P450 monooxygenase involved in the metabolism of various endogenous substrates, including fatty acids, steroid hormones and vitamins. Mechanistically, uses molecular oxygen inserting one oxygen atom into a substrate, and reducing the second into a water molecule, with two electrons provided by NADPH via cytochrome P450 reductase (NADPH--hemoprotein reductase). Catalyzes the hydroxylation of carbon-hydrogen bonds. Exhibits high catalytic activity for the formation of hydroxyestrogens from estrone (E1) and 17beta-estradiol (E2), namely 2-hydroxy E1 and E2. Metabolizes cholesterol toward 25-hydroxycholesterol, a physiological regulator of cellular cholesterol homeostasis. May act as a major enzyme for all-trans retinoic acid biosynthesis in the liver. Catalyzes two successive oxidative transformation of all-trans retinol to all-trans retinal and then to the active form all-trans retinoic acid. Primarily catalyzes stereoselective epoxidation of the last double bond of polyunsaturated fatty acids (PUFA), displaying a strong preference for the (R,S) stereoisomer. Catalyzes bisallylic hydroxylation and omega-1 hydroxylation of PUFA. May also participate in eicosanoids metabolism by converting hydroperoxide species into oxo metabolites (lipoxygenase-like reaction, NADPH-independent). Plays a role in the oxidative metabolism of xenobiotics. Catalyzes the N-hydroxylation of heterocyclic amines and the O-deethylation of phenacetin. Metabolizes caffeine via N3-demethylation. This chain is Cytochrome P450 1A2 (CYP1A2), found in Macaca fuscata fuscata (Japanese macaque).